The following is a 1400-amino-acid chain: MNQEIMNLFNPTTPAQVFDQIRISIASPEKILSWSYGEIKKPETINYRTFKPERDGLFCARIFGPIKDYECLCGKYKRMKYKGIICEKCSVEVTLSRVRRERMGHIELAAPVAHIWFLKSLPSRIGLLLDMTLKDLERILYFEYYVVLEPGLTALKDRQLLSEEEYLRAQDEYGQDSFTAMIGAEAIRELLKGLELEKLETHLRAEMQETDSDIKHKKLAKRLKIVEAFRFSGNKPEWMIMTVVPVIPPDLRPLVPLDGGRFATSDLNDLYRRVINRNNRLKRLMELRAPDIIIRNEKRMLQEAVDALFDNGRRGRVITGANKRPLKSLADMLKGKQGRFRQNLLGKRVDYSGRSVIVVGPELRLHQCGLPKKMALELFKPFIYSRLDAKGLSTTVKQAKKLVEKERPEVWDILDEVIREHPVLLNRAPTLHRLGIQAFEPVLIEGKAIQLHPLVCSAFNADFDGDQMAVHVPLSLEAQLEARVLMMSTNNILHPANGLPIIVPSQDIVLGLYYLSILREGLPGEGKLYGEMAEIEHALHSKVIHLHTKIKYRCEGMDEEGKPVTKWYETTAGRAMLGQVLPKHPRVPFDTINKLMTKKEISGVIDQVYRHCGQKETVIFCDRIMALGFYNAFKAGISFGKDDMVVPSSKWKIVEDTRTLAKEFEQQYNDGLITHGEKYNKVVDAWSKCTKKISEDMMTEISAVKKNPKGGEAQINSIFMMSNSGARGSQDQMRQLAGMRGLMAKPSGEIIETPIISNFKEGLSVLEYFNSTHGARKGLADTALKTANSGYLTRRLVDVAQDCIITADDCGTKLGIKMRAIIDAGTVVASLASRILGRTAGEDLREPSTNRIVVKRGTLMEESHVDALQQAGIQEVKIRSALTCELVNGICGKCYGRDLARGTPVNHGEAVGVIAAQSIGEPGTQLTMRTFHIGGAAQINEQSFIESNFDGKIVIKNKAIAKNSENLSVAMVRNMVVAVVDADGTERATHRIQYGARMRVDEGDMVKRGQRIAEWDPYTRPVLTEVEGIIGFEDLVEGQSISETLDESTGIAKRVVIDWRSTRGGADLRPAIVIKGKDGKVQKLARGGDARYMLSVDAILSVDVGSVVKSGDILARISTESAKTRDITGGLPRVAELFEARKPKDAAIIAEIAGTIRFGRDYKNKRRISIEPMDKEEETREYLIPKGKHIHLQDGDIVEKGDFIVEGNPAPHDILAIKGIEELAAYLVNEIQEVYRLQGVLINDKHIEVIVRQMLQKVEITDQGETDMISGEQIDKIEFDQINAKAKEEGKKIATGTPVLLGITKASLQTRSFFSAASFQETTRVLTEAAVNGKVDPLEGLKENVIVGRLIPAGTGASMSKIREVAIKRDKMILDEREKQAAAIVPTAPEAEPLALPTPE.

Residues Cys71, Cys73, Cys86, and Cys89 each contribute to the Zn(2+) site. The Mg(2+) site is built by Asp462, Asp464, and Asp466. Positions 810, 884, 891, and 894 each coordinate Zn(2+).

The protein belongs to the RNA polymerase beta' chain family. In terms of assembly, the RNAP catalytic core consists of 2 alpha, 1 beta, 1 beta' and 1 omega subunit. When a sigma factor is associated with the core the holoenzyme is formed, which can initiate transcription. Mg(2+) is required as a cofactor. Requires Zn(2+) as cofactor.

It carries out the reaction RNA(n) + a ribonucleoside 5'-triphosphate = RNA(n+1) + diphosphate. In terms of biological role, DNA-dependent RNA polymerase catalyzes the transcription of DNA into RNA using the four ribonucleoside triphosphates as substrates. This chain is DNA-directed RNA polymerase subunit beta', found in Rhodopseudomonas palustris (strain BisA53).